The primary structure comprises 678 residues: Penicillin-binding protein activator LpoA (678 aa).

A signal peptide spans Met-1 to Gly-26. The N-palmitoyl cysteine moiety is linked to residue Cys-27. Cys-27 is lipidated: S-diacylglycerol cysteine. Disordered stretches follow at residues Ala-304 to Val-338 and Ile-495 to Asn-530. The segment covering Thr-513–Thr-529 has biased composition (low complexity).

Belongs to the LpoA family. As to quaternary structure, interacts with PBP1a.

It is found in the cell outer membrane. Regulator of peptidoglycan synthesis that is essential for the function of penicillin-binding protein 1A (PBP1a). The chain is Penicillin-binding protein activator LpoA from Escherichia coli O6:H1 (strain CFT073 / ATCC 700928 / UPEC).